A 4010-amino-acid chain; its full sequence is Extracellular matrix organizing protein FRAS1 (4010 aa).

The first 25 residues, Met-1–Gly-25, serve as a signal peptide directing secretion. 5 VWFC domains span residues Ala-26 to Ala-87, Gly-92 to Val-152, Lys-156 to Ser-216, Arg-218 to Ala-278, and Arg-282 to Ile-342. At Ala-26 to Ser-3903 the chain is on the extracellular side. Residue Ser-343 is modified to Phosphoserine. Residues Ser-358–Thr-416 form the VWFC 6 domain. 14 FU repeats span residues Lys-408–Gln-459, Gly-461–Gln-504, His-506–Asn-552, Gln-554–Ala-598, Thr-601–Pro-646, His-648–Leu-704, Thr-707–Asn-752, Glu-754–Leu-799, Val-802–Lys-851, Arg-853–Leu-899, Asn-902–Leu-947, Thr-951–Arg-996, Ser-998–Ala-1041, and Lys-1045–Gly-1088. Asn-727 is a glycosylation site (N-linked (GlcNAc...) asparagine). Asn-1094 and Asn-1107 each carry an N-linked (GlcNAc...) asparagine glycan. 7 CSPG repeats span residues Thr-1101 to Ser-1196, Ala-1216 to Asn-1307, Ala-1328 to Ser-1440, Ala-1465 to Ala-1561, Pro-1597 to Thr-1691, Gly-1712 to Ser-1812, and Pro-1834 to Ser-1938. N-linked (GlcNAc...) asparagine glycosylation occurs at Asn-1506. Asn-1779 carries an N-linked (GlcNAc...) asparagine glycan. N-linked (GlcNAc...) asparagine glycans are attached at residues Asn-1950 and Asn-1980. CSPG repeat units lie at residues Glu-1959–Thr-2059, Ile-2080–Val-2179, Pro-2201–Ser-2293, Ala-2313–Ser-2406, and Thr-2441–Lys-2538. 5 consecutive Calx-beta domains span residues Val-2545–Ser-2648, Ala-2661–Ala-2772, Ala-2786–Ser-2892, Ile-2907–Gly-3009, and Ala-3027–Gly-3131. N-linked (GlcNAc...) asparagine glycans are attached at residues Asn-2565, Asn-2666, and Asn-2684. 6 N-linked (GlcNAc...) asparagine glycosylation sites follow: Asn-2910, Asn-2987, Asn-3072, Asn-3220, Asn-3678, and Asn-3877. Residues Ile-3904–Val-3924 traverse the membrane as a helical segment. Topologically, residues Thr-3925–Val-4010 are cytoplasmic.

This sequence belongs to the FRAS1 family.

It localises to the cell membrane. Functionally, involved in extracellular matrix organization. Required for the regulation of epidermal-basement membrane adhesion responsible for proper organogenesis during embryonic development. Involved in brain organization and function. This chain is Extracellular matrix organizing protein FRAS1, found in Mus musculus (Mouse).